The chain runs to 394 residues: Elongation factor Tu (394 aa).

Residues 10–204 enclose the tr-type G domain; the sequence is KPHVNVGTIG…AMDDYIPAPE (195 aa). The interval 19–26 is G1; it reads GHVDHGKT. Residue 19 to 26 coordinates GTP; that stretch reads GHVDHGKT. Mg(2+) is bound at residue Thr-26. The G2 stretch occupies residues 60-64; the sequence is GITIN. Residues 81–84 form a G3 region; that stretch reads DCPG. GTP contacts are provided by residues 81–85 and 136–139; these read DCPGH and NKCD. A G4 region spans residues 136–139; that stretch reads NKCD. Positions 174 to 176 are G5; it reads SAL.

It belongs to the TRAFAC class translation factor GTPase superfamily. Classic translation factor GTPase family. EF-Tu/EF-1A subfamily. Monomer.

It localises to the cytoplasm. The enzyme catalyses GTP + H2O = GDP + phosphate + H(+). Functionally, GTP hydrolase that promotes the GTP-dependent binding of aminoacyl-tRNA to the A-site of ribosomes during protein biosynthesis. The chain is Elongation factor Tu from Francisella tularensis subsp. tularensis (strain FSC 198).